The chain runs to 239 residues: 1-(5-phosphoribosyl)-5-[(5-phosphoribosylamino)methylideneamino] imidazole-4-carboxamide isomerase (239 aa).

The active-site Proton acceptor is the Asp-8. The Proton donor role is filled by Asp-129.

The protein belongs to the HisA/HisF family.

The protein resides in the cytoplasm. The catalysed reaction is 1-(5-phospho-beta-D-ribosyl)-5-[(5-phospho-beta-D-ribosylamino)methylideneamino]imidazole-4-carboxamide = 5-[(5-phospho-1-deoxy-D-ribulos-1-ylimino)methylamino]-1-(5-phospho-beta-D-ribosyl)imidazole-4-carboxamide. It participates in amino-acid biosynthesis; L-histidine biosynthesis; L-histidine from 5-phospho-alpha-D-ribose 1-diphosphate: step 4/9. The sequence is that of 1-(5-phosphoribosyl)-5-[(5-phosphoribosylamino)methylideneamino] imidazole-4-carboxamide isomerase from Bacillus cereus (strain Q1).